Consider the following 128-residue polypeptide: Glycine cleavage system H protein (128 aa).

One can recognise a Lipoyl-binding domain in the interval 25–107 (TITVGITHHA…YGAGWFFKLK (83 aa)). Lys-66 carries the post-translational modification N6-lipoyllysine.

It belongs to the GcvH family. As to quaternary structure, the glycine cleavage system is composed of four proteins: P, T, L and H. Requires (R)-lipoate as cofactor.

In terms of biological role, the glycine cleavage system catalyzes the degradation of glycine. The H protein shuttles the methylamine group of glycine from the P protein to the T protein. The polypeptide is Glycine cleavage system H protein (Neisseria meningitidis serogroup B (strain ATCC BAA-335 / MC58)).